A 457-amino-acid polypeptide reads, in one-letter code: Guanine nucleotide-binding protein subunit alpha homolog (457 aa).

The G-alpha domain occupies R131–Q457. A G1 motif region spans residues K134–T147. GTP-binding positions include G139–S146, L274–T280, D299–Q303, N369–D372, and A429. Mg(2+) is bound by residues S146 and T280. Positions D272–T280 are G2 motif. Positions F295–R304 are G3 motif. Positions I365 to D372 are G4 motif. The segment at T427–T432 is G5 motif.

It belongs to the G-alpha family. G(12) subfamily. In terms of assembly, g proteins are composed of 3 units; alpha, beta and gamma. The alpha chain contains the guanine nucleotide binding site. In ovary, expressed in nurse cells and oocyte. In early embryos, distributed uniformly. At the extended germband stage, accumulates in the mesoderm.

It is found in the cytoplasm. In terms of biological role, may play a role in a signal transduction pathway used during gastrulation. Required specifically for the ventral furrow and posterior midgut invaginations, where it is necessary for coordinating cell shape changes. Guanine nucleotide-binding proteins (G proteins) are involved as modulators or transducers in various transmembrane signaling systems. The chain is Guanine nucleotide-binding protein subunit alpha homolog (cta) from Drosophila melanogaster (Fruit fly).